We begin with the raw amino-acid sequence, 24 residues long: Alpha-lactalbumin (24 aa).

This sequence belongs to the glycosyl hydrolase 22 family. As to quaternary structure, lactose synthase (LS) is a heterodimer of a catalytic component, beta1,4-galactosyltransferase (beta4Gal-T1) and a regulatory component, alpha-lactalbumin (LA). Glycosylated (50% of the proteins). As to expression, mammary gland specific. Secreted in milk.

Its subcellular location is the secreted. Regulatory subunit of lactose synthase, changes the substrate specificity of galactosyltransferase in the mammary gland making glucose a good acceptor substrate for this enzyme. This enables LS to synthesize lactose, the major carbohydrate component of milk. In other tissues, galactosyltransferase transfers galactose onto the N-acetylglucosamine of the oligosaccharide chains in glycoproteins. The polypeptide is Alpha-lactalbumin (LALBA) (Felis catus (Cat)).